The chain runs to 240 residues: 6-carboxyhexanoate--CoA ligase (240 aa).

It belongs to the BioW family. As to quaternary structure, homodimer. Mg(2+) is required as a cofactor.

It carries out the reaction heptanedioate + ATP + CoA = 6-carboxyhexanoyl-CoA + AMP + diphosphate. The protein operates within metabolic intermediate metabolism; pimeloyl-CoA biosynthesis; pimeloyl-CoA from pimelate: step 1/1. In terms of biological role, catalyzes the transformation of pimelate into pimeloyl-CoA with concomitant hydrolysis of ATP to AMP. This Aquifex aeolicus (strain VF5) protein is 6-carboxyhexanoate--CoA ligase.